The following is a 45-amino-acid chain: Large ribosomal subunit protein bL34 (45 aa).

Residues 23 to 45 (ETPGGKKVLSARRAKGRKNLIAK) are disordered. Basic residues predominate over residues 31–45 (LSARRAKGRKNLIAK).

It belongs to the bacterial ribosomal protein bL34 family.

This chain is Large ribosomal subunit protein bL34, found in Elusimicrobium minutum (strain Pei191).